Here is a 290-residue protein sequence, read N- to C-terminus: Protease HtpX homolog (290 aa).

2 helical membrane-spanning segments follow: residues 4 to 24 (ILLF…VASL) and 39 to 59 (TALL…SLLI). H144 is a Zn(2+) binding site. E145 is an active-site residue. A Zn(2+)-binding site is contributed by H148. 2 consecutive transmembrane segments (helical) span residues 159-179 (LIQG…GYAV) and 199-219 (VSTI…VAWF). Residue E224 participates in Zn(2+) binding.

It belongs to the peptidase M48B family. The cofactor is Zn(2+).

It localises to the cell inner membrane. The chain is Protease HtpX homolog from Variovorax paradoxus (strain S110).